The chain runs to 107 residues: Sperm-specific class P protein 32 (107 aa).

The segment at 1-20 (MLTIEPPSATFPASGGSSTH) is disordered. In terms of domain architecture, MSP spans 1–107 (MLTIEPPSAT…GDVTILLKTN (107 aa)).

Expressed at higher level in testis.

This Caenorhabditis elegans protein is Sperm-specific class P protein 32 (ssp-32).